Consider the following 247-residue polypeptide: 2,3-bisphosphoglycerate-dependent phosphoglycerate mutase (247 aa).

Residues 8–15 (RHGESVWN), 21–22 (TG), Arg-60, 87–90 (ERHY), Lys-98, 114–115 (RR), and 183–184 (GN) contribute to the substrate site. The Tele-phosphohistidine intermediate role is filled by His-9. Glu-87 serves as the catalytic Proton donor/acceptor.

This sequence belongs to the phosphoglycerate mutase family. BPG-dependent PGAM subfamily.

It catalyses the reaction (2R)-2-phosphoglycerate = (2R)-3-phosphoglycerate. It functions in the pathway carbohydrate degradation; glycolysis; pyruvate from D-glyceraldehyde 3-phosphate: step 3/5. Its function is as follows. Catalyzes the interconversion of 2-phosphoglycerate and 3-phosphoglycerate. This is 2,3-bisphosphoglycerate-dependent phosphoglycerate mutase from Thermobifida fusca (strain YX).